The primary structure comprises 175 residues: 3-hydroxydecanoyl-[acyl-carrier-protein] dehydratase (175 aa).

The active site involves H74.

It belongs to the thioester dehydratase family. FabA subfamily. In terms of assembly, homodimer.

The protein resides in the cytoplasm. It carries out the reaction a (3R)-hydroxyacyl-[ACP] = a (2E)-enoyl-[ACP] + H2O. The catalysed reaction is (3R)-hydroxydecanoyl-[ACP] = (2E)-decenoyl-[ACP] + H2O. The enzyme catalyses (2E)-decenoyl-[ACP] = (3Z)-decenoyl-[ACP]. The protein operates within lipid metabolism; fatty acid biosynthesis. Functionally, necessary for the introduction of cis unsaturation into fatty acids. Catalyzes the dehydration of (3R)-3-hydroxydecanoyl-ACP to E-(2)-decenoyl-ACP and then its isomerization to Z-(3)-decenoyl-ACP. Can catalyze the dehydratase reaction for beta-hydroxyacyl-ACPs with saturated chain lengths up to 16:0, being most active on intermediate chain length. This Alcanivorax borkumensis (strain ATCC 700651 / DSM 11573 / NCIMB 13689 / SK2) protein is 3-hydroxydecanoyl-[acyl-carrier-protein] dehydratase.